Reading from the N-terminus, the 2555-residue chain is Neurogenic locus notch homolog protein 1 (2555 aa).

The signal sequence occupies residues 1–18 (MPPLLAPLLCLALLPALA). Topologically, residues 19 to 1735 (ARGPRCSQPG…VEPPPPAQLH (1717 aa)) are extracellular. EGF-like domains follow at residues 20 to 58 (RGPRCSQPGETCLNGGKCEAANGTEACVCGGAFVGPRCQ), 59 to 99 (DPNP…PLCL), 102 to 139 (LDNACLTNPCRNGGTCDLLTLTEYKCRCPPGWSGKSCQ), and 140 to 176 (QADPCASNPCANGGQCLPFEASYICHCPPSFHGPTCR). 33 disulfide bridges follow: Cys24–Cys37, Cys31–Cys46, Cys48–Cys57, Cys63–Cys74, Cys68–Cys87, Cys89–Cys98, Cys106–Cys117, Cys111–Cys127, Cys129–Cys138, Cys144–Cys155, Cys149–Cys164, Cys166–Cys175, Cys182–Cys195, Cys189–Cys204, Cys206–Cys215, Cys222–Cys233, Cys227–Cys243, Cys245–Cys254, Cys261–Cys272, Cys266–Cys281, Cys283–Cys292, Cys299–Cys312, Cys306–Cys321, Cys323–Cys332, Cys339–Cys350, Cys344–Cys359, Cys361–Cys370, Cys376–Cys387, Cys381–Cys398, Cys400–Cys409, Cys416–Cys429, Cys423–Cys438, and Cys440–Cys449. An N-linked (GlcNAc...) asparagine glycan is attached at Asn41. A glycan (O-linked (Glc...) serine) is linked at Ser65. Thr73 carries an O-linked (Fuc...) threonine glycan. Thr116 carries O-linked (Fuc...) threonine glycosylation. Ser146 is a glycosylation site (O-linked (Glc...) serine). Residues 178-216 (DVNECGQKPGLCRHGGTCHNEVGSYRCVCRATHTGPNCE) enclose the EGF-like 5; calcium-binding domain. A glycan (O-linked (Fuc...) threonine) is linked at Thr194. In terms of domain architecture, EGF-like 6 spans 218–255 (PYVPCSPSPCQNGGTCRPTGDVTHECACLPGFTGQNCE). O-linked (Fuc...) threonine; alternate glycosylation occurs at Thr232. Thr232 carries O-linked (GalNAc...) threonine; alternate glycosylation. An EGF-like 7; calcium-binding domain is found at 257–293 (NIDDCPGNNCKNGGACVDGVNTYNCRCPPEWTGQYCT). The region spanning 295–333 (DVDECQLMPNACQNGGTCHNTHGGYNCVCVNGWTGEDCS) is the EGF-like 8; calcium-binding domain. Thr311 is a glycosylation site (O-linked (Fuc...) threonine). Residues 335 to 371 (NIDDCASAACFHGATCHDRVASFYCECPHGRTGLLCH) form the EGF-like 9; calcium-binding domain. A glycan (O-linked (Glc...) serine) is linked at Ser341. Thr349 carries an O-linked (Fuc...) threonine glycan. Residues 372-410 (LNDACISNPCNEGSNCDTNPVNGKAICTCPSGYTGPACS) enclose the EGF-like 10 domain. The O-linked (Glc...) serine glycan is linked to Ser378. Positions 412–450 (DVDECSLGANPCEHAGKCINTLGSFECQCLQGYTGPRCE) constitute an EGF-like 11; calcium-binding domain. The segment at 420–421 (AN) is interaction with DLL4. Ca(2+) is bound by residues Thr432 and Ser435. Ser435 carries O-linked (Glc...) serine glycosylation. Positions 448-452 (RCEID) are interaction with DLL4. Ca(2+) contacts are provided by Asp452, Val453, and Glu455. The 37-residue stretch at 452–488 (DVNECVSNPCQNDATCLDQIGEFQCICMPGYEGVHCE) folds into the EGF-like 12; calcium-binding domain. 3 disulfide bridges follow: Cys456/Cys467, Cys461/Cys476, and Cys478/Cys487. The O-linked (Glc...) serine glycan is linked to Ser458. O-linked (Fuc...) threonine glycosylation is present at Thr466. Ca(2+) is bound by residues Asp469 and Gln470. Ca(2+)-binding residues include Asn490, Thr491, and Glu493. The EGF-like 13; calcium-binding domain occupies 490–526 (NTDECASSPCLHNGRCLDKINEFQCECPTGFTGHLCQ). 74 disulfide bridges follow: Cys494-Cys505, Cys499-Cys514, Cys516-Cys525, Cys532-Cys543, Cys537-Cys552, Cys554-Cys563, Cys570-Cys580, Cys575-Cys589, Cys591-Cys600, Cys607-Cys618, Cys612-Cys627, Cys629-Cys638, Cys645-Cys655, Cys650-Cys664, Cys666-Cys675, Cys682-Cys693, Cys687-Cys702, Cys704-Cys713, Cys720-Cys730, Cys725-Cys739, Cys741-Cys750, Cys757-Cys768, Cys762-Cys777, Cys779-Cys788, Cys795-Cys806, Cys800-Cys815, Cys817-Cys826, Cys833-Cys844, Cys838-Cys855, Cys857-Cys866, Cys873-Cys884, Cys878-Cys893, Cys895-Cys904, Cys911-Cys922, Cys916-Cys931, Cys933-Cys942, Cys949-Cys960, Cys954-Cys969, Cys971-Cys980, Cys987-Cys998, Cys992-Cys1007, Cys1009-Cys1018, Cys1025-Cys1036, Cys1030-Cys1045, Cys1047-Cys1056, Cys1063-Cys1074, Cys1068-Cys1083, Cys1085-Cys1094, Cys1101-Cys1122, Cys1116-Cys1131, Cys1133-Cys1142, Cys1149-Cys1160, Cys1154-Cys1169, Cys1171-Cys1180, Cys1187-Cys1198, Cys1192-Cys1207, Cys1209-Cys1218, Cys1238-Cys1253, Cys1255-Cys1264, Cys1271-Cys1284, Cys1276-Cys1293, Cys1295-Cys1304, Cys1311-Cys1322, Cys1316-Cys1334, Cys1336-Cys1345, Cys1352-Cys1363, Cys1357-Cys1372, Cys1374-Cys1383, Cys1391-Cys1403, Cys1397-Cys1414, Cys1416-Cys1425, Cys1449-Cys1472, Cys1454-Cys1467, and Cys1463-Cys1479. Ser496 carries an O-linked (Glc...) serine glycan. Ca(2+)-binding residues include Asp507 and Lys508. One can recognise an EGF-like 14; calcium-binding domain in the interval 528 to 564 (DVDECASTPCKNGAKCLDGPNTYTCVCTEGYTGTHCE). A glycan (O-linked (Glc...) serine) is linked at Ser534. One can recognise an EGF-like 15; calcium-binding domain in the interval 566–601 (DIDECDPDPCHYGSCKDGVATFTCLCRPGYTGHHCE). Positions 603 to 639 (NINECSSQPCRHGGTCQDRDNAYLCFCLKGTTGPNCE) constitute an EGF-like 16; calcium-binding domain. Ser609 is a glycosylation site (O-linked (Glc...) serine). An O-linked (Fuc...) threonine glycan is attached at Thr617. Residues 641–676 (NLDDCASSPCDSGTCLDKIDGYECACEPGYTGSMCN) form the EGF-like 17; calcium-binding domain. Ser647 is a glycosylation site (O-linked (Glc...) serine). Positions 678-714 (NIDECAGNPCHNGGTCEDGINGFTCRCPEGYHDPTCL) constitute an EGF-like 18; calcium-binding domain. Thr692 carries an O-linked (Fuc...) threonine glycan. The EGF-like 19; calcium-binding domain maps to 716 to 751 (EVNECNSNPCVHGACRDSLNGYKCDCDPGWSGTNCD). O-linked (Glc...) serine glycosylation occurs at Ser722. The EGF-like 20 domain maps to 753 to 789 (NNNECESNPCVNGGTCKDMTSGYVCTCREGFSGPNCQ). Ser759 carries an O-linked (Glc...) serine glycan. O-linked (Fuc...) threonine glycosylation occurs at Thr767. Residue Ser784 is glycosylated (O-linked (GlcNAc) serine). One can recognise an EGF-like 21; calcium-binding domain in the interval 791 to 827 (NINECASNPCLNQGTCIDDVAGYKCNCLLPYTGATCE). Ser797 carries O-linked (Glc...) serine glycosylation. O-linked (Fuc...) threonine glycosylation is present at Thr805. In terms of domain architecture, EGF-like 22 spans 829–867 (VLAPCAPSPCRNGGECRQSEDYESFSCVCPTGWQGQTCE). An EGF-like 23; calcium-binding domain is found at 869–905 (DINECVLSPCRHGASCQNTHGGYRCHCQAGYSGRNCE). One can recognise an EGF-like 24 domain in the interval 907 to 943 (DIDDCRPNPCHNGGSCTDGINTAFCDCLPGFRGTFCE). Ser921 carries O-linked (Fuc) serine glycosylation. In terms of domain architecture, EGF-like 25; calcium-binding spans 945 to 981 (DINECASDPCRNGANCTDCVDSYTCTCPAGFSGIHCE). The O-linked (Glc...) serine glycan is linked to Ser951. N-linked (GlcNAc...) asparagine glycosylation is present at Asn959. EGF-like domains lie at 983 to 1019 (NTPDCTESSCFNGGTCVDGINSFTCLCPPGFTGSYCQ), 1021 to 1057 (DVNECDSQPCLHGGTCQDGCGSYRCTCPQGYTGPNCQ), 1059 to 1095 (LVHWCDSSPCKNGGKCWQTHTQYRCECPSGWTGLYCD), 1097 to 1143 (PSVS…SYCE), and 1145 to 1181 (LVDECSPSPCQNGATCTDYLGGYSCKCVAGYHGVNCS). O-linked (Fuc...) threonine glycosylation is present at Thr997. Ser1027 carries an O-linked (Glc...) serine glycan. Thr1035 carries an O-linked (Fuc...) threonine glycan. O-linked (Glc...) serine glycosylation occurs at Ser1065. The O-linked (Fuc...) threonine glycan is linked to Thr1159. N-linked (GlcNAc...) asparagine glycosylation is present at Asn1179. The EGF-like 31; calcium-binding domain occupies 1183–1219 (EIDECLSHPCQNGGTCLDLPNTYKCSCPRGTQGVHCE). An O-linked (Glc...) serine glycan is attached at Ser1189. Thr1197 carries O-linked (Fuc...) threonine glycosylation. Positions 1221–1265 (NVDDCNPPVDPVSRSPKCFNNGTCVDQVGGYSCTCPPGFVGERCE) constitute an EGF-like 32; calcium-binding domain. Asn1241 is a glycosylation site (N-linked (GlcNAc...) asparagine). EGF-like domains lie at 1267–1305 (DVNECLSNPCDARGTQNCVQRVNDFHCECRAGHTGRRCE), 1307–1346 (VINGCKGKPCKNGGTCAVASNTARGFICKCPAGFEGATCE), 1348–1384 (DARTCGSLRCLNGGTCISGPRSPTCLCLGPFTGPECQ), and 1387–1426 (ASSPCLGGNPCYNQGTCEPTSESPFYRCLCPAKFNGLLCH). An O-linked (Glc...) serine glycan is attached at Ser1273. O-linked (Fuc...) threonine glycosylation occurs at Thr1362. A glycan (O-linked (GlcNAc...) threonine) is linked at Thr1379. Thr1402 carries O-linked (Fuc...) threonine; alternate glycosylation. Residue Thr1402 is glycosylated (O-linked (GalNAc...) threonine; alternate). 3 LNR repeats span residues 1449-1489 (CELP…PWKN), 1490-1531 (CTQS…CNPL), and 1532-1571 (YDQYCKDHFSDGHCDQGCNSAECEWDGLDCAEHVPERLAA). Residues Asp1457, Asn1460, Asp1475, and Asp1478 each contribute to the Ca(2+) site. N-linked (GlcNAc...) asparagine glycosylation is present at Asn1489. Intrachain disulfides connect Cys1490–Cys1514, Cys1496–Cys1509, Cys1505–Cys1521, Cys1536–Cys1549, and Cys1545–Cys1561. An N-linked (GlcNAc...) asparagine glycan is attached at Asn1587. An O-linked (GalNAc...) threonine glycan is attached at Thr1725. The interaction with PSEN1 stretch occupies residues 1728 to 1760 (PPPPAQLHFMYVAAAAFVLLFFVGCGVLLSRKR). Residues 1736-1756 (FMYVAAAAFVLLFFVGCGVLL) traverse the membrane as a helical segment. The Cytoplasmic portion of the chain corresponds to 1757–2555 (SRKRRRQHGQ…QIARIPEAFK (799 aa)). Residue Lys1759 forms a Glycyl lysine isopeptide (Lys-Gly) (interchain with G-Cter in ubiquitin) linkage. The interval 1780-1808 (KKKRREPLGEDSVGLKPLKNASDGALMDD) is disordered. Thr1861 carries the post-translational modification Phosphothreonine. 6 ANK repeats span residues 1927–1956 (TGETALHLAARYSRSDAAKRLLEASADANI), 1960–1990 (MGRTPLHAAVSADAQGVFQILIRNRATDLDA), 1994–2023 (DGTTPLILAARLAVEGMLEDLINSHADVNA), 2027–2056 (LGKSALHWAAAVNNVDAAVVLLKNGANKDM), 2060–2089 (REETPLFLAAREGSYETAKVLLDHFANRDI), and 2095–2122 (RLPRDIAQERMHHDIVRLLDEYNLVRSP). The tract at residues 1947-1955 (LLEASADAN) is HIF1AN-binding. Asn1955 carries the (3S)-3-hydroxyasparagine; by HIF1AN; partial modification. Residues 2014–2022 (LINSHADVN) form an HIF1AN-binding region. Asn2022 carries the (3S)-3-hydroxyasparagine; by HIF1AN modification. Disordered stretches follow at residues 2151–2194 (PGVQ…LDSS), 2379–2447 (LVQT…QPLG), and 2483–2555 (TPPS…EAFK). A compositionally biased stretch (low complexity) spans 2379 to 2408 (LVQTQQVQPQNLQMQQQNLQPANIQQQQSL). A compositionally biased stretch (polar residues) spans 2483-2502 (TPPSQHSYSSPVDNTPSHQL). Low complexity predominate over residues 2512-2527 (PSPESPDQWSSSSPHS). A compositionally biased stretch (polar residues) spans 2528–2547 (NVSDWSEGVSSPPTSMQSQI).

It belongs to the NOTCH family. Heterodimer of a C-terminal fragment N(TM) and an N-terminal fragment N(EC) which are probably linked by disulfide bonds. Interacts with DNER, DTX1, DTX2 and RBPJ/RBPSUH. Also interacts with MAML1, MAML2 and MAML3 which act as transcriptional coactivators for NOTCH1. The NOTCH1 intracellular domain interacts with SNW1; the interaction involves multimerized NOTCH1 NICD and is implicated in a formation of an intermediate preactivation complex which associates with DNA-bound CBF-1/RBPJ. The activated membrane-bound form interacts with AAK1 which promotes NOTCH1 stabilization. Forms a trimeric complex with FBXW7 and SGK1. Interacts with HIF1AN. HIF1AN negatively regulates the function of notch intracellular domain (NICD), accelerating myogenic differentiation. Interacts (via NICD) with SNAI1 (via zinc fingers); the interaction induces SNAI1 degradation via MDM2-mediated ubiquitination and inhibits SNAI1-induced cell invasion. Interacts (via NICD) with MDM2A. Interacts (via NICD) with BCL6; the interaction decreases MAML1 recruitment by NOTCH1 NICD on target genes DNA and inhibits NOTCH1 transactivation activity. Interacts with THBS4. Interacts (via the EGF-like repeat region) with CCN3 (via CTCK domain). Interacts (via EGF-like domains) with DLL4 (via N-terminal DSL and MNNL domains). Interacts with ZMIZ1. Interacts (via NICD domain) with MEGF10 (via the cytoplasmic domain). Interacts with DLL1 and JAG1. Interacts (via NICD domain) with PRAG1. Forms a complex with PRAG1, N1ICD and MAML1, in a MAML1-dependent manner. Interacts (via transmembrane region) with PSEN1; the interaction is direct. Interacts with ZFP64. In terms of processing, synthesized in the endoplasmic reticulum as an inactive form which is proteolytically cleaved by a furin-like convertase in the trans-Golgi network before it reaches the plasma membrane to yield an active, ligand-accessible form. Cleavage results in a C-terminal fragment N(TM) and a N-terminal fragment N(EC). Following ligand binding, it is cleaved by ADAM17 to yield a membrane-associated intermediate fragment called notch extracellular truncation (NEXT). Following endocytosis, this fragment is then cleaved by one of the catalytic subunits of gamma-secretase (PSEN1 or PSEN2), to release a Notch-derived peptide containing the intracellular domain (NICD) from the membrane. Phosphorylated. Post-translationally, O-glycosylated on the EGF-like domains. O-glucosylated at Ser-435 by KDELC1 and KDELC2. Contains both O-linked fucose and O-linked glucose in the EGF-like domains 11, 12 and 13, which are interacting with the residues on DLL4. O-linked glycosylation by GALNT11 is involved in determination of left/right symmetry: glycosylation promotes activation of NOTCH1, possibly by promoting cleavage by ADAM17, modulating the balance between motile and immotile (sensory) cilia at the left-right organiser (LRO). MFNG-, RFNG- and LFNG-mediated modification of O-fucose residues at specific EGF-like domains results in inhibition of its activation by JAG1 and enhancement of its activation by DLL1 via an increased binding to DLL1. In terms of processing, ubiquitinated. Undergoes 'Lys-29'-linked polyubiquitination by ITCH; promotes the lysosomal degradation of non-activated internalized NOTCH1. Deubiquitination by USP12 is required for transport of internalized non-activated receptor from late endosomes to lysosomes for degradation. Monoubiquitination at Lys-1759 is required for activation by gamma-secretase cleavage, it promotes interaction with AAK1, which stabilizes it. Deubiquitination by EIF3F is necessary for nuclear import of activated Notch. Hydroxylated at Asn-1955 by HIF1AN. Hydroxylated at Asn-2022 by HIF1AN. Hydroxylation reduces affinity for HI1AN and may thus indirectly modulate negative regulation of NICD. As to expression, in fetal tissues most abundant in spleen, brain stem and lung. Also present in most adult tissues where it is found mainly in lymphoid tissues.

The protein localises to the cell membrane. It localises to the late endosome membrane. Its subcellular location is the nucleus. Functionally, functions as a receptor for membrane-bound ligands Jagged-1 (JAG1), Jagged-2 (JAG2) and Delta-1 (DLL1) to regulate cell-fate determination. Upon ligand activation through the released notch intracellular domain (NICD) it forms a transcriptional activator complex with RBPJ/RBPSUH and activates genes of the enhancer of split locus. Affects the implementation of differentiation, proliferation and apoptotic programs. Involved in angiogenesis; negatively regulates endothelial cell proliferation and migration and angiogenic sprouting. Involved in the maturation of both CD4(+) and CD8(+) cells in the thymus. Important for follicular differentiation and possibly cell fate selection within the follicle. During cerebellar development, functions as a receptor for neuronal DNER and is involved in the differentiation of Bergmann glia. Represses neuronal and myogenic differentiation. May play an essential role in postimplantation development, probably in some aspect of cell specification and/or differentiation. May be involved in mesoderm development, somite formation and neurogenesis. May enhance HIF1A function by sequestering HIF1AN away from HIF1A. Required for the THBS4 function in regulating protective astrogenesis from the subventricular zone (SVZ) niche after injury. Involved in determination of left/right symmetry by modulating the balance between motile and immotile (sensory) cilia at the left-right organiser (LRO). The polypeptide is Neurogenic locus notch homolog protein 1 (NOTCH1) (Homo sapiens (Human)).